We begin with the raw amino-acid sequence, 321 residues long: Ribonuclease Z (321 aa).

Positions 62, 64, 66, 67, 139, 210, and 268 each coordinate Zn(2+). D66 serves as the catalytic Proton acceptor.

It belongs to the RNase Z family. In terms of assembly, homodimer. Zn(2+) is required as a cofactor.

It catalyses the reaction Endonucleolytic cleavage of RNA, removing extra 3' nucleotides from tRNA precursor, generating 3' termini of tRNAs. A 3'-hydroxy group is left at the tRNA terminus and a 5'-phosphoryl group is left at the trailer molecule.. Functionally, zinc phosphodiesterase, which displays some tRNA 3'-processing endonuclease activity. Probably involved in tRNA maturation, by removing a 3'-trailer from precursor tRNA. This chain is Ribonuclease Z, found in Trichodesmium erythraeum (strain IMS101).